We begin with the raw amino-acid sequence, 115 residues long: U2-ctenitoxin-Pn1b (115 aa).

An N-terminal signal peptide occupies residues 1–17 (MKVAVIILSILVLAAAS). The propeptide occupies 18–61 (ESIEEYREDFSRPNAMERSANDWIPTAPSAVERSADFAVEELER). Intrachain disulfides connect cysteine 64–cysteine 78, cysteine 71–cysteine 84, cysteine 75–cysteine 113, cysteine 77–cysteine 98, and cysteine 86–cysteine 96. Residue lysine 115 is a propeptide.

Belongs to the neurotoxin 03 (Tx2) family. 04 subfamily. In terms of tissue distribution, expressed by the venom gland.

It is found in the secreted. Blocks voltage-gated sodium channels (Nav). The protein is U2-ctenitoxin-Pn1b of Phoneutria nigriventer (Brazilian armed spider).